The chain runs to 840 residues: Phosphatidylglycerol lysyltransferase (840 aa).

At 1-8 (MNQEVKNK) the chain is on the cytoplasmic side. The helical transmembrane segment at 9–29 (IFSILKITFATALFIFVAITL) threads the bilayer. At 30 to 52 (YRELSGINFKDTLVEFSKINRMS) the chain is on the extracellular side. A helical transmembrane segment spans residues 53–73 (LVLLFIGGGASLVILSMYDVI). The Cytoplasmic portion of the chain corresponds to 74 to 89 (LSRALKMDISLGKVLR). The helical transmembrane segment at 90-110 (VSYIINALNAIVGFGGFIGAG) threads the bilayer. Topologically, residues 111 to 128 (VRAMVYKNYTHDKKKLVH) are extracellular. Residues 129–149 (FISLILISMLTGLSLLSLLIV) form a helical membrane-spanning segment. Over 150-161 (FHVFDASLILDK) the chain is Cytoplasmic. The helical transmembrane segment at 162 to 182 (ITWVRWVLYVVSFFLPLFIIY) threads the bilayer. The Extracellular segment spans residues 183-200 (SMVRPPDKNNRFVGLYCT). A helical membrane pass occupies residues 201-221 (LVSCVEWLAAAVVLYFCGVIV). The Cytoplasmic portion of the chain corresponds to 222–229 (DAHVSFMS). Residues 230–250 (FIAIFIIAALSGLVSFIPGGF) traverse the membrane as a helical segment. At 251-271 (GAFDLVVLLGFKTLGVPEEKV) the chain is on the extracellular side. The helical transmembrane segment at 272-292 (LLMLLLYRFAYYFVPVIIALI) threads the bilayer. Residues 293–337 (LSSFEFGTSAKKYIEGSKYFIPAKDVTSFLMSYQKDIIAKIPSLS) lie on the Cytoplasmic side of the membrane. Residues 338 to 358 (LAILVFFTSMIFFVNNLTIVY) form a helical membrane-spanning segment. Topologically, residues 359-369 (DALYDGNHLTY) are extracellular. The helical transmembrane segment at 370–390 (YILLAIHTSACLLLLLNVVGI) threads the bilayer. Over 391–394 (YKQS) the chain is Cytoplasmic. Transmembrane regions (helical) follow at residues 395-415 (RRAI…TFFT) and 416-436 (YASY…IVAF). At 437–450 (RRARRLKRPVRMRN) the chain is on the cytoplasmic side. Residues 451-471 (IVAMLLFSLFILYVNHIFIAG) traverse the membrane as a helical segment. Residues 472 to 489 (TLYALDIYTIEMHTSVLR) are Extracellular-facing. The helical transmembrane segment at 490 to 510 (YYFWLTILIIAIIIGMIAWLF) threads the bilayer. The Cytoplasmic segment spans residues 511-840 (DYQFSKVRIS…SKVMRVIRHK (330 aa)).

It belongs to the LPG synthase family.

Its subcellular location is the cell membrane. It carries out the reaction L-lysyl-tRNA(Lys) + a 1,2-diacyl-sn-glycero-3-phospho-(1'-sn-glycerol) = a 1,2-diacyl-sn-glycero-3-phospho-1'-(3'-O-L-lysyl)-sn-glycerol + tRNA(Lys). Its function is as follows. Catalyzes the transfer of a lysyl group from L-lysyl-tRNA(Lys) to membrane-bound phosphatidylglycerol (PG), which produces lysylphosphatidylglycerol (LPG), a major component of the bacterial membrane with a positive net charge. LPG synthesis contributes to bacterial virulence as it is involved in the resistance mechanism against cationic antimicrobial peptides (CAMP) produces by the host's immune system (defensins, cathelicidins) and by the competing microorganisms (bacteriocins). In fact, the modification of anionic phosphatidylglycerol with positively charged L-lysine results in repulsion of the peptides. This Staphylococcus aureus (strain COL) protein is Phosphatidylglycerol lysyltransferase (mprF).